A 139-amino-acid polypeptide reads, in one-letter code: ATP synthase epsilon chain (139 aa).

Belongs to the ATPase epsilon chain family. As to quaternary structure, F-type ATPases have 2 components, CF(1) - the catalytic core - and CF(0) - the membrane proton channel. CF(1) has five subunits: alpha(3), beta(3), gamma(1), delta(1), epsilon(1). CF(0) has three main subunits: a, b and c.

Its subcellular location is the cell inner membrane. Functionally, produces ATP from ADP in the presence of a proton gradient across the membrane. The sequence is that of ATP synthase epsilon chain from Actinobacillus pleuropneumoniae serotype 7 (strain AP76).